A 516-amino-acid polypeptide reads, in one-letter code: Cilia- and flagella-associated protein 53 (516 aa).

Coiled coils occupy residues 217 to 283 (EEKK…LQVK) and 316 to 440 (MQGY…RQMK). 2 stretches are compositionally biased toward basic and acidic residues: residues 417–436 (KELL…DRNA) and 461–472 (QAEREEEQREFE). Disordered stretches follow at residues 417-443 (KELL…KVAQ) and 455-475 (YQQS…EAGL).

Belongs to the CFAP53 family.

The protein localises to the cytoplasm. The protein resides in the cytoskeleton. It is found in the cilium axoneme. It localises to the microtubule organizing center. Its subcellular location is the centrosome. The protein localises to the centriolar satellite. Functionally, microtubule inner protein (MIP) part of the dynein-decorated doublet microtubules (DMTs) in cilia axoneme, which is required for motile cilia beating. Regulates motility patterns of both 9+0 and 9+2 motile cilia through differential localization and recruitment of axonemal dynein components. Required for motile cilium formation and movement. Involved in the establishment of left-right symmetry during embryogenesis. The sequence is that of Cilia- and flagella-associated protein 53 from Xenopus laevis (African clawed frog).